We begin with the raw amino-acid sequence, 252 residues long: Small ribosomal subunit protein uS2B (252 aa).

At Ser2 the chain carries N-acetylserine. Composition is skewed to acidic residues over residues Val213 to Lys229 and Glu241 to Trp252. Residues Val213 to Trp252 are disordered.

It belongs to the universal ribosomal protein uS2 family. As to quaternary structure, component of the small ribosomal subunit. Mature ribosomes consist of a small (40S) and a large (60S) subunit. The 40S subunit contains about 33 different proteins and 1 molecule of RNA (18S). The 60S subunit contains about 49 different proteins and 3 molecules of RNA (25S, 5.8S and 5S). Interacts with RPS21.

It localises to the cytoplasm. Functionally, required for the assembly and/or stability of the 40S ribosomal subunit. Required for the processing of the 20S rRNA-precursor to mature 18S rRNA in a late step of the maturation of 40S ribosomal subunits. In Saccharomyces cerevisiae (strain RM11-1a) (Baker's yeast), this protein is Small ribosomal subunit protein uS2B.